Consider the following 360-residue polypeptide: Phospho-N-acetylmuramoyl-pentapeptide-transferase (360 aa).

Topologically, residues 1–25 (MLVWLAEHLVKYYSGFNVFSYLTFR) are periplasmic. Residues 26–46 (AIVSLLTALFISLWMGPRMIA) form a helical membrane-spanning segment. Over 47–71 (RLQKLSFGQVVRNDGPESHFSKRGT) the chain is Cytoplasmic. Residues 72–92 (PTMGGIMILTAIVISVLLWAY) form a helical membrane-spanning segment. Proline 93 is a topological domain (periplasmic). The helical transmembrane segment at 94–114 (SNPYVWCVLVVLIGYGIIGFV) threads the bilayer. Residues 115–131 (DDYRKVVRKDTKGLIAR) are Cytoplasmic-facing. Residues 132–152 (WKYFWMSVIALGVAFALYLVG) traverse the membrane as a helical segment. At 153 to 167 (KDTPVTQLVVPFFKD) the chain is on the periplasmic side. A helical transmembrane segment spans residues 168–188 (VMPQLGLFYILLSYFVIVGTG). Topologically, residues 189–198 (NAVNLTDGLD) are cytoplasmic. A helical transmembrane segment spans residues 199 to 219 (GLAIMPTVFVAAGFALVAWAT). Over 220-235 (GNMNFANYLHIPYLRH) the chain is Periplasmic. A helical membrane pass occupies residues 236–256 (AGELVIVCTAIVGAGLGFLWF). Residues 257–262 (NTYPAQ) are Cytoplasmic-facing. Residues 263–283 (VFMGDVGSLALGGALGIIAVL) form a helical membrane-spanning segment. Residues 284 to 287 (LRQE) are Periplasmic-facing. The helical transmembrane segment at 288–308 (FLLVIMGGVFVVETLSVILQV) threads the bilayer. At 309-337 (GSFKLRGQRIFRMAPIHHHYELKGWPEPR) the chain is on the cytoplasmic side. The chain crosses the membrane as a helical span at residues 338–358 (VIVRFWIISLMLVLIGLATLK). Residues 359–360 (VR) lie on the Periplasmic side of the membrane.

This sequence belongs to the glycosyltransferase 4 family. MraY subfamily. It depends on Mg(2+) as a cofactor.

It localises to the cell inner membrane. The enzyme catalyses UDP-N-acetyl-alpha-D-muramoyl-L-alanyl-gamma-D-glutamyl-meso-2,6-diaminopimeloyl-D-alanyl-D-alanine + di-trans,octa-cis-undecaprenyl phosphate = di-trans,octa-cis-undecaprenyl diphospho-N-acetyl-alpha-D-muramoyl-L-alanyl-D-glutamyl-meso-2,6-diaminopimeloyl-D-alanyl-D-alanine + UMP. Its pathway is cell wall biogenesis; peptidoglycan biosynthesis. Its function is as follows. Catalyzes the initial step of the lipid cycle reactions in the biosynthesis of the cell wall peptidoglycan: transfers peptidoglycan precursor phospho-MurNAc-pentapeptide from UDP-MurNAc-pentapeptide onto the lipid carrier undecaprenyl phosphate, yielding undecaprenyl-pyrophosphoryl-MurNAc-pentapeptide, known as lipid I. The polypeptide is Phospho-N-acetylmuramoyl-pentapeptide-transferase (Salmonella paratyphi C (strain RKS4594)).